Consider the following 37-residue polypeptide: Bactericidin B-3 (37 aa).

Glycine amide is present on Gly-37.

Belongs to the cecropin family.

Its subcellular location is the secreted. In terms of biological role, cecropins have lytic and antibacterial activity against several Gram-positive and Gram-negative bacteria. The protein is Bactericidin B-3 of Manduca sexta (Tobacco hawkmoth).